Reading from the N-terminus, the 190-residue chain is Peptidoglycan recognition protein 1 (190 aa).

Positions 1 to 21 are cleaved as a signal peptide; sequence MSRRYTPLAWVLLALLGLGAA. At Q22 the chain carries Pyrrolidone carboxylic acid. 3 cysteine pairs are disulfide-bonded: C24–C148, C40–C85, and C61–C67. One can recognise an N-acetylmuramoyl-L-alanine amidase domain in the interval 46–174; it reads QPVRYVVVSH…RDVQQTLSPG (129 aa).

This sequence belongs to the N-acetylmuramoyl-L-alanine amidase 2 family. In terms of assembly, homodimer; disulfide-linked. Synthesized only in bone marrow. The mature protein is stored in the cytoplasmic granules of eosinophils and neutrophils but is absent from monocytes, lymphocytes, or platelets.

It is found in the secreted. It localises to the cytoplasmic granule. Functionally, innate immunity protein that plays several important functions in antimicrobial and antitumor defense systems. Acts as a pattern receptor that binds to murein peptidoglycans (PGN) of Gram-positive bacteria and thus provides bactericidal activity. Forms an equimolar complex with heat shock protein HSPA1A and induces programmed cell death through apoptosis and necroptosis in tumor cell lines by activating the TNFR1 receptor on the target cell membrane. In addition, acts in complex with the Ca(2+)-binding protein S100A4 as a chemoattractant able to induce lymphocyte movement. Mechanistically, this complex acts as a ligand of the chemotactic receptors CCR5 and CXCR3 which are present on the cells of the immune system. Also promotes the activation of lymphocytes that become able to kill virus-infected cells as well as tumor cells by modulating the spectrum of their target-cell specificity. Induction of cytotoxicity on monocyte surface requires interaction with TREM1 receptor. This Bos taurus (Bovine) protein is Peptidoglycan recognition protein 1 (PGLYRP1).